The primary structure comprises 201 residues: Large ribosomal subunit protein uL4 (201 aa).

The segment at 46–71 (QKTRAEVVGSGKKPWRQKGTGRARAG) is disordered.

Belongs to the universal ribosomal protein uL4 family. As to quaternary structure, part of the 50S ribosomal subunit.

Functionally, one of the primary rRNA binding proteins, this protein initially binds near the 5'-end of the 23S rRNA. It is important during the early stages of 50S assembly. It makes multiple contacts with different domains of the 23S rRNA in the assembled 50S subunit and ribosome. Its function is as follows. Forms part of the polypeptide exit tunnel. The sequence is that of Large ribosomal subunit protein uL4 from Shewanella piezotolerans (strain WP3 / JCM 13877).